We begin with the raw amino-acid sequence, 160 residues long: Lymphocyte antigen 96 (160 aa).

Positions 1-18 (MLPFLFFSTLFSSIFTEA) are cleaved as a signal peptide. 3 disulfides stabilise this stretch: C25/C51, C37/C148, and C95/C105. A glycan (N-linked (GlcNAc...) asparagine) is linked at N26. N114 is a glycosylation site (N-linked (GlcNAc...) asparagine). The tract at residues 119–123 (FSFKG) is interaction with lipopolysaccharide.

As to quaternary structure, heterogeneous homomer formed from homodimers; disulfide-linked. Belongs to the lipopolysaccharide (LPS) receptor, a multi-protein complex containing at least CD14, LY96 and TLR4. Binds to the extracellular domains of TLR2 and TLR4. Ligand binding induces interaction with TLR4 and oligomerization of the complex. N-glycosylated; high-mannose.

The protein resides in the secreted. The protein localises to the extracellular space. Functionally, binds bacterial lipopolysaccharide (LPS). Cooperates with TLR4 in the innate immune response to bacterial lipopolysaccharide (LPS), and with TLR2 in the response to cell wall components from Gram-positive and Gram-negative bacteria. Enhances TLR4-dependent activation of NF-kappa-B. Cells expressing both LY96 and TLR4, but not TLR4 alone, respond to LPS. In Homo sapiens (Human), this protein is Lymphocyte antigen 96 (LY96).